The chain runs to 239 residues: Geranylgeranylglyceryl phosphate synthase (239 aa).

The Mg(2+) site is built by aspartate 19 and serine 48. Sn-glycerol 1-phosphate is bound by residues 167–173 (YLEAGSG), 197–198 (GG), and 219–220 (GT).

It belongs to the GGGP/HepGP synthase family. Group II subfamily. Mg(2+) is required as a cofactor.

The protein localises to the cytoplasm. The enzyme catalyses sn-glycerol 1-phosphate + (2E,6E,10E)-geranylgeranyl diphosphate = sn-3-O-(geranylgeranyl)glycerol 1-phosphate + diphosphate. It functions in the pathway membrane lipid metabolism; glycerophospholipid metabolism. Its function is as follows. Prenyltransferase that catalyzes the transfer of the geranylgeranyl moiety of geranylgeranyl diphosphate (GGPP) to the C3 hydroxyl of sn-glycerol-1-phosphate (G1P). This reaction is the first ether-bond-formation step in the biosynthesis of archaeal membrane lipids. The protein is Geranylgeranylglyceryl phosphate synthase of Methanopyrus kandleri (strain AV19 / DSM 6324 / JCM 9639 / NBRC 100938).